Consider the following 165-residue polypeptide: MKYTSYILAFQLCIVLGSLGCYCQDPYVKEAENLKKYFNAVDPDVADNGTLFLDILRNWKEESDRKIMQSQIVSFYFKLFKNFKDDQRIQKSVETIKEDINVKFFNSNKKKWDDFEKLTNYSVTDLNVQRKAVHELIQVMAELSPAAKIGKRKRSQMFRGRRASQ.

An N-terminal signal peptide occupies residues 1–23 (MKYTSYILAFQLCIVLGSLGCYC). Residue Q24 is modified to Pyrrolidone carboxylic acid. 2 N-linked (GlcNAc...) asparagine glycosylation sites follow: N48 and N120.

Belongs to the type II (or gamma) interferon family. Homodimer. Interacts with IFNGR1 (via extracellular domain); this interaction promotes IFNGR1 dimerization.

The protein localises to the secreted. Its function is as follows. Type II interferon produced by immune cells such as T-cells and NK cells that plays crucial roles in antimicrobial, antiviral, and antitumor responses by activating effector immune cells and enhancing antigen presentation. Primarily signals through the JAK-STAT pathway after interaction with its receptor IFNGR1 to affect gene regulation. Upon IFNG binding, IFNGR1 intracellular domain opens out to allow association of downstream signaling components JAK2, JAK1 and STAT1, leading to STAT1 activation, nuclear translocation and transcription of IFNG-regulated genes. Many of the induced genes are transcription factors such as IRF1 that are able to further drive regulation of a next wave of transcription. Plays a role in class I antigen presentation pathway by inducing a replacement of catalytic proteasome subunits with immunoproteasome subunits. In turn, increases the quantity, quality, and repertoire of peptides for class I MHC loading. Increases the efficiency of peptide generation also by inducing the expression of activator PA28 that associates with the proteasome and alters its proteolytic cleavage preference. Up-regulates as well MHC II complexes on the cell surface by promoting expression of several key molecules such as cathepsins B/CTSB, H/CTSH, and L/CTSL. Participates in the regulation of hematopoietic stem cells during development and under homeostatic conditions by affecting their development, quiescence, and differentiation. The protein is Interferon gamma (IFNG) of Papio anubis (Olive baboon).